A 167-amino-acid polypeptide reads, in one-letter code: UPF0303 protein mlr5144 (167 aa).

Belongs to the UPF0303 family.

This Mesorhizobium japonicum (strain LMG 29417 / CECT 9101 / MAFF 303099) (Mesorhizobium loti (strain MAFF 303099)) protein is UPF0303 protein mlr5144.